A 326-amino-acid polypeptide reads, in one-letter code: uncharacterized protein (326 aa).

It to B.subtilis XkdQ.

This is an uncharacterized protein from Bacillus subtilis (strain 168).